A 260-amino-acid chain; its full sequence is Hydroxyethylthiazole kinase 1 (260 aa).

Residue methionine 39 coordinates substrate. ATP contacts are provided by arginine 115 and threonine 160. Glycine 187 is a binding site for substrate.

Belongs to the Thz kinase family. It depends on Mg(2+) as a cofactor.

It carries out the reaction 5-(2-hydroxyethyl)-4-methylthiazole + ATP = 4-methyl-5-(2-phosphooxyethyl)-thiazole + ADP + H(+). The protein operates within cofactor biosynthesis; thiamine diphosphate biosynthesis; 4-methyl-5-(2-phosphoethyl)-thiazole from 5-(2-hydroxyethyl)-4-methylthiazole: step 1/1. Catalyzes the phosphorylation of the hydroxyl group of 4-methyl-5-beta-hydroxyethylthiazole (THZ). This chain is Hydroxyethylthiazole kinase 1, found in Streptococcus pneumoniae (strain JJA).